A 132-amino-acid polypeptide reads, in one-letter code: Small ribosomal subunit protein uS8 (132 aa).

The protein belongs to the universal ribosomal protein uS8 family. Part of the 30S ribosomal subunit. Contacts proteins S5 and S12.

In terms of biological role, one of the primary rRNA binding proteins, it binds directly to 16S rRNA central domain where it helps coordinate assembly of the platform of the 30S subunit. The polypeptide is Small ribosomal subunit protein uS8 (Clostridium botulinum (strain Alaska E43 / Type E3)).